We begin with the raw amino-acid sequence, 61 residues long: MRKLKMMLCVMMLPLVVVGCTSKQSVSQCVKPPPPPAWIMQPPPDWQTPLNGIISPSGNDW.

An N-terminal signal peptide occupies residues 1 to 19 (MRKLKMMLCVMMLPLVVVG). Cys20 carries N-palmitoyl cysteine lipidation. A lipid anchor (S-diacylglycerol cysteine) is attached at Cys20.

Belongs to the lambdalikevirus o-spanin family. As to quaternary structure, homodimer; disulfide-linked. Interacts (via C-terminus) with RZ (via C-terminus). Part of the spanin complex which spans the entire periplasmic space. The spanin complex is composed of spanin, inner membrane subunit and spanin, outer membrane subunit.

Its subcellular location is the cell outer membrane. Component of the spanin complex that disrupts the outer membrane and causes cell lysis during virus exit. The spanin complex conducts the final step in cell lysis by disrupting the outer membrane after holin and endolysin action have permeabilized the inner membrane and degraded the host peptidoglycans. The sequence is that of Prophage outer membrane lipoprotein RzoR (rzoR) from Escherichia coli (strain K12).